The primary structure comprises 276 residues: Mitochondrial distribution and morphology protein 12 (276 aa).

The SMP-LTD domain maps to 1–276; it reads MSIDIQWNLL…FVWPSYFTLY (276 aa). Residues 68–104 form a disordered region; that stretch reads TLYSDDSSSLDDEESDREEENMTELPPYGATENGVHK. Residues 75-89 are compositionally biased toward acidic residues; that stretch reads SSLDDEESDREEENM.

The protein belongs to the MDM12 family. Component of the ER-mitochondria encounter structure (ERMES) or MDM complex, composed of mmm1, mdm10, mdm12 and mdm34. A mmm1 homodimer associates with one molecule of mdm12 on each side in a pairwise head-to-tail manner, and the SMP-LTD domains of mmm1 and mdm12 generate a continuous hydrophobic tunnel for phospholipid trafficking.

It localises to the mitochondrion outer membrane. The protein resides in the endoplasmic reticulum membrane. Functionally, component of the ERMES/MDM complex, which serves as a molecular tether to connect the endoplasmic reticulum (ER) and mitochondria. Components of this complex are involved in the control of mitochondrial shape and protein biogenesis, and function in nonvesicular lipid trafficking between the ER and mitochondria. Mdm12 is required for the interaction of the ER-resident membrane protein mmm1 and the outer mitochondrial membrane-resident beta-barrel protein mdm10. The mdm12-mmm1 subcomplex functions in the major beta-barrel assembly pathway that is responsible for biogenesis of all mitochondrial outer membrane beta-barrel proteins, and acts in a late step after the SAM complex. The mdm10-mdm12-mmm1 subcomplex further acts in the TOM40-specific pathway after the action of the mdm12-mmm1 complex. Essential for establishing and maintaining the structure of mitochondria and maintenance of mtDNA nucleoids. In Schizosaccharomyces japonicus (strain yFS275 / FY16936) (Fission yeast), this protein is Mitochondrial distribution and morphology protein 12.